We begin with the raw amino-acid sequence, 330 residues long: tRNA-modifying protein YgfZ (330 aa).

Folate-binding residues include Trp28 and Trp190.

It belongs to the tRNA-modifying YgfZ family.

It localises to the cytoplasm. Folate-binding protein involved in regulating the level of ATP-DnaA and in the modification of some tRNAs. It is probably a key factor in regulatory networks that act via tRNA modification, such as initiation of chromosomal replication. This is tRNA-modifying protein YgfZ from Serratia proteamaculans (strain 568).